The sequence spans 308 residues: Coenzyme PQQ synthesis protein B (308 aa).

This sequence belongs to the PqqB family.

It participates in cofactor biosynthesis; pyrroloquinoline quinone biosynthesis. Its function is as follows. May be involved in the transport of PQQ or its precursor to the periplasm. The sequence is that of Coenzyme PQQ synthesis protein B from Klebsiella pneumoniae (strain 342).